Reading from the N-terminus, the 432-residue chain is Probable rhamnogalacturonase E (432 aa).

An N-terminal signal peptide occupies residues 1–21; the sequence is MQSKTFSVLSSCLLLIATVQG. An intrachain disulfide couples C42 to C68. 3 N-linked (GlcNAc...) asparagine glycosylation sites follow: N53, N91, and N106. D221 (proton donor) is an active-site residue. A disulfide bridge links C223 with C240. 2 N-linked (GlcNAc...) asparagine glycosylation sites follow: N241 and N256. The active site involves H296. 2 disulfides stabilise this stretch: C329/C335 and C357/C366.

Belongs to the glycosyl hydrolase 28 family.

The protein localises to the secreted. In terms of biological role, pectinolytic enzymes consist of four classes of enzymes: pectine lyase, polygalacturonase, pectin methylesterase and rhamnogalacturonase. Hydrolyzes alpha-D-galacturonopyranosyl-(1,2)-alpha-L-rhamnopyranosyl linkages in the backbone of the hairy regions of pectins. This chain is Probable rhamnogalacturonase E (rhgE), found in Aspergillus oryzae (strain ATCC 42149 / RIB 40) (Yellow koji mold).